The primary structure comprises 616 residues: Carboxylic acid transporter protein homolog (616 aa).

Residues 1-11 are compositionally biased toward basic and acidic residues; sequence MSSSITDEKIS. The disordered stretch occupies residues 1–65; it reads MSSSITDEKI…LYHNPSLPAQ (65 aa). Serine 2 bears the N-acetylserine mark. Residues 2–140 lie on the Cytoplasmic side of the membrane; it reads SSSITDEKIS…LRKMTWQNWN (139 aa). Serine 4 is subject to Phosphoserine. A Glycyl lysine isopeptide (Lys-Gly) (interchain with G-Cter in ubiquitin) cross-link involves residue lysine 9. Phosphoserine occurs at positions 11, 61, and 66. Residue threonine 70 is modified to Phosphothreonine. Residues 141–161 form a helical membrane-spanning segment; it reads YFFMGYFAWLSAAWAFFCVSV. Residues 162 to 176 lie on the Extracellular side of the membrane; the sequence is SVAPLAELYDRPTKD. The helical transmembrane segment at 177 to 197 threads the bilayer; that stretch reads ITWGLGLVLFVRSAGAVIFGL. At 198–205 the chain is on the cytoplasmic side; sequence WTDKSSRK. The helical transmembrane segment at 206–226 threads the bilayer; it reads WPYITCLFLFVIAQLCTPWCD. The Extracellular segment spans residues 227–230; the sequence is TYEK. The chain crosses the membrane as a helical span at residues 231 to 251; that stretch reads FLGVRWITGIAMGGIYGCASA. Residues 252 to 263 lie on the Cytoplasmic side of the membrane; that stretch reads TAIEDAPVKARS. Residues 264–284 traverse the membrane as a helical segment; it reads FLSGLFFSAYAMGFIFAIIFY. Over 285 to 296 the chain is Extracellular; that stretch reads RAFGYFRDDGWK. Residues 297 to 317 traverse the membrane as a helical segment; that stretch reads ILFWFSIFLPILLIFWRLLWP. Residues 318–363 lie on the Cytoplasmic side of the membrane; that stretch reads ETKYFTKVLKARKLILSDAVKANGGEPLPKANFKQKMVSMKRTVQK. Lysine 338 is covalently cross-linked (Glycyl lysine isopeptide (Lys-Gly) (interchain with G-Cter in ubiquitin)). A helical transmembrane segment spans residues 364-384; that stretch reads YWLLFAYLVVLLVGPNYLTHA. Residues 385-402 lie on the Extracellular side of the membrane; that stretch reads SQDLLPTMLRAQLGLSKD. The chain crosses the membrane as a helical span at residues 403–423; it reads AVTVIVVVTNIGAICGGMIFG. The Cytoplasmic segment spans residues 424–432; that stretch reads QFMEVTGRR. The chain crosses the membrane as a helical span at residues 433 to 453; the sequence is LGLLIACTMGGCFTYPAFMLR. Over 454 to 457 the chain is Extracellular; that stretch reads SEKA. A helical membrane pass occupies residues 458 to 478; that stretch reads ILGAGFMLYFCVFGVWGILPI. Residues 479 to 489 are Cytoplasmic-facing; that stretch reads HLAELAPADAR. The helical transmembrane segment at 490–510 threads the bilayer; it reads ALVAGLSYQLGNLASAAASTI. Residues 511-535 are Extracellular-facing; it reads ETQLADRYPLERDASGAVIKEDYAK. Residues 536–556 form a helical membrane-spanning segment; that stretch reads VMAILTGSVFIFTFACVFVGH. The Cytoplasmic segment spans residues 557 to 616; that stretch reads EKFHRDLSSPVMKKYINQVEEYEADGLSISDIVEQKTECASVKMIDSNVSKTYEEHIETV. Phosphoserine is present on residues serine 584, serine 603, and serine 606.

It belongs to the major facilitator superfamily. Sugar transporter (TC 2.A.1.1) family.

It localises to the membrane. Essential to lactate transport. The sequence is that of Carboxylic acid transporter protein homolog (JEN1) from Saccharomyces cerevisiae (strain ATCC 204508 / S288c) (Baker's yeast).